Here is an 89-residue protein sequence, read N- to C-terminus: Small ribosomal subunit protein uS15 (89 aa).

Over residues 1 to 20 (MSITQERKSALIAEHARGKT) the composition is skewed to basic and acidic residues. The segment at 1–24 (MSITQERKSALIAEHARGKTDTGS) is disordered.

It belongs to the universal ribosomal protein uS15 family. In terms of assembly, part of the 30S ribosomal subunit. Forms a bridge to the 50S subunit in the 70S ribosome, contacting the 23S rRNA.

Functionally, one of the primary rRNA binding proteins, it binds directly to 16S rRNA where it helps nucleate assembly of the platform of the 30S subunit by binding and bridging several RNA helices of the 16S rRNA. Its function is as follows. Forms an intersubunit bridge (bridge B4) with the 23S rRNA of the 50S subunit in the ribosome. This Maricaulis maris (strain MCS10) (Caulobacter maris) protein is Small ribosomal subunit protein uS15.